The sequence spans 313 residues: Inner membrane ABC transporter permease protein YdcU (313 aa).

Residues 1-25 are Cytoplasmic-facing; that stretch reads MAMNVLQSPSRPGLGKVSGFFWHNP. Residues 26–46 traverse the membrane as a helical segment; it reads GLGLFLLLLGPLMWFGIVYFG. Residues 47–92 lie on the Periplasmic side of the membrane; that stretch reads SLLTLLWQGFYTFDDFTMSVTPELTLANIRALFNPANYDIILRTLT. One can recognise an ABC transmembrane type-1 domain in the interval 87-302; that stretch reads ILRTLTMAVA…PIILIALYLA (216 aa). A helical membrane pass occupies residues 93–113; it reads MAVAVTIASAILAFPMAWYMA. Residues 114–122 lie on the Cytoplasmic side of the membrane; it reads RYTSGKMKA. The helical transmembrane segment at 123-143 threads the bilayer; that stretch reads FFYIAVMLPMWASYIVKAYAW. Topologically, residues 144–154 are periplasmic; that stretch reads TLLLAKDGVAQ. A helical membrane pass occupies residues 155–175; it reads WFLQHLGLEPLLTAFLTLPAV. Residues 176–187 are Cytoplasmic-facing; sequence GGNTLSTSGLGR. A helical transmembrane segment spans residues 188–208; it reads FLVFLYIWLPFMILPVQAALE. Topologically, residues 209–230 are periplasmic; it reads RLPPSLLQASADLGARPRQTFR. Residues 231 to 251 form a helical membrane-spanning segment; it reads YVVLPLAIPGIAAGSIFTFSL. A topological domain (cytoplasmic) is located at residue Thr-252. The helical transmembrane segment at 253–273 threads the bilayer; the sequence is LGDFIVPQLVGPPGYFIGNMV. At 274–283 the chain is on the periplasmic side; sequence YSQQGAIGNM. A helical membrane pass occupies residues 284-304; sequence PMAAAFTLVPIILIALYLAFV. At 305-313 the chain is on the cytoplasmic side; that stretch reads KRLGAFDAL.

The protein belongs to the binding-protein-dependent transport system permease family. CysTW subfamily.

It is found in the cell inner membrane. In terms of biological role, probably part of the ABC transporter complex YdcSTUV. Probably responsible for the translocation of the substrate across the membrane. The protein is Inner membrane ABC transporter permease protein YdcU (ydcU) of Escherichia coli (strain K12).